Reading from the N-terminus, the 322-residue chain is 4-hydroxythreonine-4-phosphate dehydrogenase (322 aa).

Substrate is bound by residues H126 and T127. Residues H160, H205, and H260 each contribute to the a divalent metal cation site. The substrate site is built by K268, N277, and R286.

This sequence belongs to the PdxA family. In terms of assembly, homodimer. Zn(2+) is required as a cofactor. Mg(2+) serves as cofactor. Requires Co(2+) as cofactor.

It localises to the cytoplasm. It carries out the reaction 4-(phosphooxy)-L-threonine + NAD(+) = 3-amino-2-oxopropyl phosphate + CO2 + NADH. It participates in cofactor biosynthesis; pyridoxine 5'-phosphate biosynthesis; pyridoxine 5'-phosphate from D-erythrose 4-phosphate: step 4/5. Functionally, catalyzes the NAD(P)-dependent oxidation of 4-(phosphooxy)-L-threonine (HTP) into 2-amino-3-oxo-4-(phosphooxy)butyric acid which spontaneously decarboxylates to form 3-amino-2-oxopropyl phosphate (AHAP). This chain is 4-hydroxythreonine-4-phosphate dehydrogenase, found in Paracoccus denitrificans (strain Pd 1222).